Consider the following 90-residue polypeptide: DNA-directed RNA polymerase subunit omega (90 aa).

It belongs to the RNA polymerase subunit omega family. In terms of assembly, the RNAP catalytic core consists of 2 alpha, 1 beta, 1 beta' and 1 omega subunit. When a sigma factor is associated with the core the holoenzyme is formed, which can initiate transcription.

The catalysed reaction is RNA(n) + a ribonucleoside 5'-triphosphate = RNA(n+1) + diphosphate. Its function is as follows. Promotes RNA polymerase assembly. Latches the N- and C-terminal regions of the beta' subunit thereby facilitating its interaction with the beta and alpha subunits. The sequence is that of DNA-directed RNA polymerase subunit omega (rpoZ) from Streptomyces coelicolor (strain ATCC BAA-471 / A3(2) / M145).